Consider the following 122-residue polypeptide: Large ribosomal subunit protein bL20c (122 aa).

The protein belongs to the bacterial ribosomal protein bL20 family.

It is found in the plastid. It localises to the chloroplast. In terms of biological role, binds directly to 23S ribosomal RNA and is necessary for the in vitro assembly process of the 50S ribosomal subunit. It is not involved in the protein synthesizing functions of that subunit. This is Large ribosomal subunit protein bL20c from Dioscorea elephantipes (Elephant's foot yam).